Reading from the N-terminus, the 546-residue chain is Phosphoglucomutase (546 aa).

Ser-135 acts as the Phosphoserine intermediate in catalysis. Residues Ser-135, Asp-288, Asp-290, and Asp-292 each coordinate Mg(2+).

It belongs to the phosphohexose mutase family. Mg(2+) is required as a cofactor.

It carries out the reaction alpha-D-glucose 1-phosphate = alpha-D-glucose 6-phosphate. Its pathway is glycolipid metabolism; diglucosyl-diacylglycerol biosynthesis. Its function is as follows. Catalyzes the interconversion between glucose-6-phosphate and alpha-glucose-1-phosphate. This is the first step in the biosynthesis of diglucosyl-diacylglycerol (Glc2-DAG), i.e. a glycolipid found in the membrane, which is also used as a membrane anchor for lipoteichoic acid (LTA). This chain is Phosphoglucomutase (pgcA), found in Staphylococcus epidermidis (strain ATCC 12228 / FDA PCI 1200).